Reading from the N-terminus, the 104-residue chain is Pyrimidine/purine nucleoside phosphorylase (104 aa).

It belongs to the nucleoside phosphorylase PpnP family.

The catalysed reaction is a purine D-ribonucleoside + phosphate = a purine nucleobase + alpha-D-ribose 1-phosphate. It carries out the reaction adenosine + phosphate = alpha-D-ribose 1-phosphate + adenine. The enzyme catalyses cytidine + phosphate = cytosine + alpha-D-ribose 1-phosphate. It catalyses the reaction guanosine + phosphate = alpha-D-ribose 1-phosphate + guanine. The catalysed reaction is inosine + phosphate = alpha-D-ribose 1-phosphate + hypoxanthine. It carries out the reaction thymidine + phosphate = 2-deoxy-alpha-D-ribose 1-phosphate + thymine. The enzyme catalyses uridine + phosphate = alpha-D-ribose 1-phosphate + uracil. It catalyses the reaction xanthosine + phosphate = alpha-D-ribose 1-phosphate + xanthine. Its function is as follows. Catalyzes the phosphorolysis of diverse nucleosides, yielding D-ribose 1-phosphate and the respective free bases. Can use uridine, adenosine, guanosine, cytidine, thymidine, inosine and xanthosine as substrates. Also catalyzes the reverse reactions. The sequence is that of Pyrimidine/purine nucleoside phosphorylase from Leptothrix cholodnii (strain ATCC 51168 / LMG 8142 / SP-6) (Leptothrix discophora (strain SP-6)).